The following is a 473-amino-acid chain: Ribulose bisphosphate carboxylase large chain (473 aa).

The propeptide occupies 1–2; the sequence is MS. P3 carries the post-translational modification N-acetylproline. K14 is modified (N6,N6,N6-trimethyllysine). The substrate site is built by N123 and T173. Residue K175 is the Proton acceptor of the active site. Residue K177 coordinates substrate. The Mg(2+) site is built by K201, D203, and E204. K201 carries the N6-carboxylysine modification. The Proton acceptor role is filled by H294. The substrate site is built by R295, H327, and S379.

The protein belongs to the RuBisCO large chain family. Type I subfamily. In terms of assembly, heterohexadecamer of 8 large chains and 8 small chains; disulfide-linked. The disulfide link is formed within the large subunit homodimers. It depends on Mg(2+) as a cofactor. In terms of processing, the disulfide bond which can form in the large chain dimeric partners within the hexadecamer appears to be associated with oxidative stress and protein turnover.

It is found in the plastid. The protein localises to the chloroplast. It carries out the reaction 2 (2R)-3-phosphoglycerate + 2 H(+) = D-ribulose 1,5-bisphosphate + CO2 + H2O. The catalysed reaction is D-ribulose 1,5-bisphosphate + O2 = 2-phosphoglycolate + (2R)-3-phosphoglycerate + 2 H(+). RuBisCO catalyzes two reactions: the carboxylation of D-ribulose 1,5-bisphosphate, the primary event in carbon dioxide fixation, as well as the oxidative fragmentation of the pentose substrate in the photorespiration process. Both reactions occur simultaneously and in competition at the same active site. The polypeptide is Ribulose bisphosphate carboxylase large chain (Cajanus cajan (Pigeon pea)).